The sequence spans 540 residues: Glucose-6-phosphate isomerase (540 aa).

The active-site Proton donor is the Glu-350. Active-site residues include His-381 and Lys-503.

Belongs to the GPI family.

The protein resides in the cytoplasm. The catalysed reaction is alpha-D-glucose 6-phosphate = beta-D-fructose 6-phosphate. Its pathway is carbohydrate biosynthesis; gluconeogenesis. It participates in carbohydrate degradation; glycolysis; D-glyceraldehyde 3-phosphate and glycerone phosphate from D-glucose: step 2/4. Catalyzes the reversible isomerization of glucose-6-phosphate to fructose-6-phosphate. This chain is Glucose-6-phosphate isomerase, found in Burkholderia orbicola (strain AU 1054).